The sequence spans 435 residues: Exodeoxyribonuclease 7 large subunit (435 aa).

A compositionally biased stretch (polar residues) spans Met1 to Ala10. Disordered stretches follow at residues Met1 to Thr21 and Ala413 to Lys435.

Belongs to the XseA family. As to quaternary structure, heterooligomer composed of large and small subunits.

The protein resides in the cytoplasm. The catalysed reaction is Exonucleolytic cleavage in either 5'- to 3'- or 3'- to 5'-direction to yield nucleoside 5'-phosphates.. Its function is as follows. Bidirectionally degrades single-stranded DNA into large acid-insoluble oligonucleotides, which are then degraded further into small acid-soluble oligonucleotides. The protein is Exodeoxyribonuclease 7 large subunit of Leifsonia xyli subsp. xyli (strain CTCB07).